We begin with the raw amino-acid sequence, 258 residues long: Phosphonates import ATP-binding protein PhnC 1 (258 aa).

The 245-residue stretch at 2–246 folds into the ABC transporter domain; that stretch reads IEFKDVGLVY…TFEEIYGRSI (245 aa). 35-42 is an ATP binding site; the sequence is GLSGAGKS.

This sequence belongs to the ABC transporter superfamily. Phosphonates importer (TC 3.A.1.9.1) family. As to quaternary structure, the complex is composed of two ATP-binding proteins (PhnC), two transmembrane proteins (PhnE) and a solute-binding protein (PhnD).

The protein localises to the cell membrane. It catalyses the reaction phosphonate(out) + ATP + H2O = phosphonate(in) + ADP + phosphate + H(+). Its function is as follows. Part of the ABC transporter complex PhnCDE involved in phosphonates import. Responsible for energy coupling to the transport system. The chain is Phosphonates import ATP-binding protein PhnC 1 from Oceanobacillus iheyensis (strain DSM 14371 / CIP 107618 / JCM 11309 / KCTC 3954 / HTE831).